A 483-amino-acid chain; its full sequence is Altronate oxidoreductase (483 aa).

An NAD(+)-binding site is contributed by 18–29 (IIQFGEGNFLRA).

The protein belongs to the mannitol dehydrogenase family. UxaB subfamily.

The enzyme catalyses D-altronate + NAD(+) = keto-D-tagaturonate + NADH + H(+). The protein operates within carbohydrate metabolism; pentose and glucuronate interconversion. This Yersinia enterocolitica serotype O:8 / biotype 1B (strain NCTC 13174 / 8081) protein is Altronate oxidoreductase.